Here is a 261-residue protein sequence, read N- to C-terminus: MLTKTRAVVLKEVKFREQSKICSLYTRDFGRISVILKGGRNLKSRLSGLFCTGSLLEVVLYNRSNRDLQLVSEARIIRSPMTAEPSMERFSAIYRLIEILKISTGNEEKNIRLFNALERTLEKLCAPCRNADAAVAWFMLKLISESGFEPSIEQCVTTGKSILPMLQEGSADDLCLTYDPGGVSLPVPAAQKGPPGQRLPVQVYLLMRTLNRLDIRSIDEIDIPADNSRLLCDILQNYCSLHNNYNPSSKNRRIISRILYE.

This sequence belongs to the RecO family.

In terms of biological role, involved in DNA repair and RecF pathway recombination. This chain is DNA repair protein RecO, found in Chlorobium phaeobacteroides (strain BS1).